Reading from the N-terminus, the 168-residue chain is ATP synthase F(1) complex subunit delta, mitochondrial (168 aa).

Residues 1–22 (MLPAALLRHPGLRRLVLQARTY) constitute a mitochondrion transit peptide. An N6-acetyllysine; alternate mark is found at K136 and K165. Residues K136 and K165 each carry the N6-succinyllysine; alternate modification.

Belongs to the ATPase epsilon chain family. As to quaternary structure, component of the ATP synthase complex composed at least of ATP5F1A/subunit alpha, ATP5F1B/subunit beta, ATP5MC1/subunit c (homooctomer), MT-ATP6/subunit a, MT-ATP8/subunit 8, ATP5ME/subunit e, ATP5MF/subunit f, ATP5MG/subunit g, ATP5MK/subunit k, ATP5MJ/subunit j, ATP5F1C/subunit gamma, ATP5F1D/subunit delta, ATP5F1E/subunit epsilon, ATP5PF/subunit F6, ATP5PB/subunit b, ATP5PD/subunit d, ATP5PO/subunit OSCP. ATP synthase complex consists of a soluble F(1) head domain (subunits alpha(3) and beta(3)) - the catalytic core - and a membrane F(0) domain - the membrane proton channel (subunits c, a, 8, e, f, g, k and j). These two domains are linked by a central stalk (subunits gamma, delta, and epsilon) rotating inside the F1 region and a stationary peripheral stalk (subunits F6, b, d, and OSCP). Component of a complex composed at least by ATPIF1, ATP5F1A, ATP5F1B, ATP5F1C AND ATP5F1E.

It is found in the mitochondrion. It localises to the mitochondrion inner membrane. Subunit delta, of the mitochondrial membrane ATP synthase complex (F(1)F(0) ATP synthase or Complex V) that produces ATP from ADP in the presence of a proton gradient across the membrane which is generated by electron transport complexes of the respiratory chain. ATP synthase complex consist of a soluble F(1) head domain - the catalytic core - and a membrane F(1) domain - the membrane proton channel. These two domains are linked by a central stalk rotating inside the F(1) region and a stationary peripheral stalk. During catalysis, ATP synthesis in the catalytic domain of F(1) is coupled via a rotary mechanism of the central stalk subunits to proton translocation. In vivo, can only synthesize ATP although its ATP hydrolase activity can be activated artificially in vitro. With the central stalk subunit gamma, is essential for the biogenesis of F(1) catalytic part of the ATP synthase complex namely in the formation of F1 assembly intermediate. This chain is ATP synthase F(1) complex subunit delta, mitochondrial, found in Rattus norvegicus (Rat).